We begin with the raw amino-acid sequence, 440 residues long: Xaa-Pro dipeptidase (440 aa).

Positions 246, 257, 337, 382, and 421 each coordinate Mn(2+).

It belongs to the peptidase M24B family. Bacterial-type prolidase subfamily. It depends on Mn(2+) as a cofactor.

It catalyses the reaction Xaa-L-Pro dipeptide + H2O = an L-alpha-amino acid + L-proline. In terms of biological role, splits dipeptides with a prolyl residue in the C-terminal position. This chain is Xaa-Pro dipeptidase, found in Aeromonas hydrophila subsp. hydrophila (strain ATCC 7966 / DSM 30187 / BCRC 13018 / CCUG 14551 / JCM 1027 / KCTC 2358 / NCIMB 9240 / NCTC 8049).